The following is a 359-amino-acid chain: Leafy/floricaula homolog FL1 (359 aa).

The disordered stretch occupies residues 113 to 170 (SEEQVVQHSEKDQLGRAGSGDTAGTSWGAQQQRKKHRHRHHITAMKGAATEEDEEDEE). Positions 144 to 155 (QRKKHRHRHHIT) are enriched in basic residues. 3 consecutive DNA-binding regions follow at residues 179–183 (REHPF), 248–255 (NKPKMRHY), and 320–323 (YVPT). Over residues 340–352 (ASSASTSTSAPTA) the composition is skewed to low complexity. The disordered stretch occupies residues 340 to 359 (ASSASTSTSAPTAHHLELPY).

Belongs to the FLO/LFY family. In terms of tissue distribution, expressed strongly in the early floral primordium and then successively in the primordia of sepals, petals, stamens and carpels. Also in the leaf primordia and young leaves.

The protein resides in the nucleus. Functionally, probable transcription factor. The chain is Leafy/floricaula homolog FL1 (LF1) from Eucalyptus globulus (Tasmanian blue gum).